We begin with the raw amino-acid sequence, 287 residues long: Small ribosomal subunit protein uS10m (287 aa).

The N-terminal 33 residues, 1–33 (MSLFSPHRILLRTGSAFQLATATRALLSTSSQL), are a transit peptide targeting the mitochondrion. Polar residues predominate over residues 33–43 (LRNTKNAQSGL). Positions 33–84 (LRNTKNAQSGLAEQARAEEPVASSPSQTTRPEQKSLEEETTKQTQTHADSTV) are disordered. The segment covering 63–73 (PEQKSLEEETT) has biased composition (basic and acidic residues). The span at 74–84 (KQTQTHADSTV) shows a compositional bias: polar residues.

It belongs to the universal ribosomal protein uS10 family. As to quaternary structure, part of the mitochondrial small ribosomal subunit.

The protein resides in the mitochondrion. Involved in mitochondrial genome encoded proteins translation. Involved in the binding of tRNA to the ribosomes. The sequence is that of Small ribosomal subunit protein uS10m (rsm10) from Emericella nidulans (strain FGSC A4 / ATCC 38163 / CBS 112.46 / NRRL 194 / M139) (Aspergillus nidulans).